Here is a 96-residue protein sequence, read N- to C-terminus: Co-chaperonin GroES (96 aa).

This sequence belongs to the GroES chaperonin family. As to quaternary structure, heptamer of 7 subunits arranged in a ring. Interacts with the chaperonin GroEL.

The protein localises to the cytoplasm. Its function is as follows. Together with the chaperonin GroEL, plays an essential role in assisting protein folding. The GroEL-GroES system forms a nano-cage that allows encapsulation of the non-native substrate proteins and provides a physical environment optimized to promote and accelerate protein folding. GroES binds to the apical surface of the GroEL ring, thereby capping the opening of the GroEL channel. The chain is Co-chaperonin GroES from Caulobacter sp. (strain K31).